Reading from the N-terminus, the 245-residue chain is Protein DEHYDRATION-INDUCED 19 homolog 4 (245 aa).

This sequence belongs to the Di19 family.

In Oryza sativa subsp. japonica (Rice), this protein is Protein DEHYDRATION-INDUCED 19 homolog 4 (DI19-4).